Consider the following 664-residue polypeptide: Intraflagellar transport protein 70B (664 aa).

TPR repeat units lie at residues 11–44, 45–78, 153–186, 188–220, 385–418, 423–456, and 458–491; these read DGEFTAVVYRLIRDARYAEAVQLLGGELQRSPRS, RAGLSLLGYCYYRLQEFALAAECYEQLGQLHPEL, LDGQVNLGCLLYKEGHYEAACSKFSAALQASGYR, DLSYNLALAYYSSRHYALALKHIADIIEHGIRQ, LTEQLRKLTIQVQEARHNKDDEAVKKAVNEYEDT, IPVLMAQAKIYWNLENYPMVEKLFRKSVEFCNDH, and VWKLNVAHVLFMQENKYKEAIGFYEPIVKKHYDN. Positions 509-532 form a coiled coil; that stretch reads MISQNEEAEELMRKIGKEEEQLSY. One copy of the TPR 8 repeat lies at 543 to 576; that stretch reads CIVNLVIGTLYCAKGNYDFGISRVIKSLEPCNKK.

This sequence belongs to the TTC30/dfy-1/fleer family. As to quaternary structure, interacts with the IFT B complex components IFT27, IFT46, IFT74, IFT52, IFT57, IFT80, IFT81 and IFT88. Interacts with KIF17.

The protein localises to the cell projection. It is found in the cilium. Its function is as follows. Required for polyglutamylation of axonemal tubulin. Plays a role in anterograde intraflagellar transport (IFT), the process by which cilia precursors are transported from the base of the cilium to the site of their incorporation at the tip. This chain is Intraflagellar transport protein 70B (IFT70B), found in Bos taurus (Bovine).